The chain runs to 345 residues: 4-hydroxyproline 2-epimerase (345 aa).

Gln-85 is a substrate binding site. Residue Ser-93 is the Proton acceptor of the active site. Residues 94 to 95 and Asp-251 contribute to the substrate site; that span reads GS. The active-site Proton donor is the Cys-255. 256–257 contributes to the substrate binding site; the sequence is GT.

Belongs to the proline racemase family.

The enzyme catalyses trans-4-hydroxy-L-proline = cis-4-hydroxy-D-proline. Functionally, catalyzes the epimerization of trans-4-hydroxy-L-proline (t4LHyp) to cis-4-hydroxy-D-proline (c4DHyp). May be involved in a degradation pathway of t4LHyp, which would allow A.tumefaciens to grow on t4LHyp as a sole carbon source. Can also catalyze the epimerization of trans-3-hydroxy-L-proline (t3LHyp) to cis-3-hydroxy-D-proline (c3DHyp) in vitro. Displays no proline racemase activity. This Agrobacterium fabrum (strain C58 / ATCC 33970) (Agrobacterium tumefaciens (strain C58)) protein is 4-hydroxyproline 2-epimerase.